We begin with the raw amino-acid sequence, 295 residues long: Bifunctional protein FolD (295 aa).

NADP(+) contacts are provided by residues 163–165 (GRS), Ser-188, and Ile-229.

This sequence belongs to the tetrahydrofolate dehydrogenase/cyclohydrolase family. As to quaternary structure, homodimer.

It carries out the reaction (6R)-5,10-methylene-5,6,7,8-tetrahydrofolate + NADP(+) = (6R)-5,10-methenyltetrahydrofolate + NADPH. It catalyses the reaction (6R)-5,10-methenyltetrahydrofolate + H2O = (6R)-10-formyltetrahydrofolate + H(+). Its pathway is one-carbon metabolism; tetrahydrofolate interconversion. Functionally, catalyzes the oxidation of 5,10-methylenetetrahydrofolate to 5,10-methenyltetrahydrofolate and then the hydrolysis of 5,10-methenyltetrahydrofolate to 10-formyltetrahydrofolate. The polypeptide is Bifunctional protein FolD (Hyphomonas neptunium (strain ATCC 15444)).